A 431-amino-acid chain; its full sequence is uncharacterized protein (431 aa).

Disordered regions lie at residues 31–55, 257–291, and 365–431; these read VPAS…QAGV, QNGG…PKQD, and FQSP…HRKA. Polar residues predominate over residues 42 to 55; it reads VSASQPNGAHQAGV. Positions 412–425 are enriched in basic and acidic residues; the sequence is VEYRRGRSLRESRE.

This is an uncharacterized protein from Arabidopsis thaliana (Mouse-ear cress).